We begin with the raw amino-acid sequence, 418 residues long: MDKFRIQGPTQLIGEVTIAGAKNSALPILFATLLAEEPVNIHNVPKLKDIDTAIQLISQLGAKVKYNKSVYVDASNIAVYCAPYDLVKTMRASIWALGPLVARFGQGQVSLPGGCAIGARPVDLHLDGLAKLGATITLEKGYVKAYIKGRLRGAHIVMDKVSVGATVTVMSAATLAQGITIIDNAALEPEIVDTANFLITLGANIIGAGSNQIIIDGVTSLGGGEYRVLPDRIETGTFLVAAAISRGHIVCHATRPNMLDAVIAKLRETGAKIETGEDWISLNIHGKRPKAITVRTAPYPGFPTDMQAQFSLLNLIAKGTSVITETIFENRFMHIPELMRMGVHAKIENNTIICHGVEKLSGAQVMATDLRASASLVLAGCIAEGVTIVDRIYHIDRGYDCIENKLRNLGANIERIYS.

Lys22–Asn23 is a phosphoenolpyruvate binding site. Residue Arg91 participates in UDP-N-acetyl-alpha-D-glucosamine binding. Catalysis depends on Cys115, which acts as the Proton donor. Cys115 carries the post-translational modification 2-(S-cysteinyl)pyruvic acid O-phosphothioketal. UDP-N-acetyl-alpha-D-glucosamine-binding positions include Arg120 to Leu124, Lys160 to Val163, Asp305, and Ile327.

The protein belongs to the EPSP synthase family. MurA subfamily.

It localises to the cytoplasm. The enzyme catalyses phosphoenolpyruvate + UDP-N-acetyl-alpha-D-glucosamine = UDP-N-acetyl-3-O-(1-carboxyvinyl)-alpha-D-glucosamine + phosphate. The protein operates within cell wall biogenesis; peptidoglycan biosynthesis. Functionally, cell wall formation. Adds enolpyruvyl to UDP-N-acetylglucosamine. The polypeptide is UDP-N-acetylglucosamine 1-carboxyvinyltransferase (Baumannia cicadellinicola subsp. Homalodisca coagulata).